Consider the following 261-residue polypeptide: Triosephosphate isomerase (261 aa).

10–12 (NWK) provides a ligand contact to substrate. The active-site Electrophile is H100. Residue E172 is the Proton acceptor of the active site. Residues G178, S218, and 239-240 (GG) each bind substrate.

This sequence belongs to the triosephosphate isomerase family. As to quaternary structure, homodimer.

It localises to the cytoplasm. The enzyme catalyses D-glyceraldehyde 3-phosphate = dihydroxyacetone phosphate. It participates in carbohydrate biosynthesis; gluconeogenesis. Its pathway is carbohydrate degradation; glycolysis; D-glyceraldehyde 3-phosphate from glycerone phosphate: step 1/1. Its function is as follows. Involved in the gluconeogenesis. Catalyzes stereospecifically the conversion of dihydroxyacetone phosphate (DHAP) to D-glyceraldehyde-3-phosphate (G3P). In Mycobacterium leprae (strain TN), this protein is Triosephosphate isomerase.